A 538-amino-acid polypeptide reads, in one-letter code: Small ribosomal subunit protein uS3m (538 aa).

The segment at 111–134 (SSEGTEEERNEVRGRGAGKRVESI) is disordered. The segment covering 120-134 (NEVRGRGAGKRVESI) has biased composition (basic and acidic residues).

It belongs to the universal ribosomal protein uS3 family.

It is found in the mitochondrion. The sequence is that of Small ribosomal subunit protein uS3m (RPS3) from Oryza sativa subsp. japonica (Rice).